Reading from the N-terminus, the 141-residue chain is Ly6/PLAUR domain-containing protein 1 (141 aa).

The first 20 residues, 1–20, serve as a signal peptide directing secretion; that stretch reads MWVLGIAATFCGLFWLPGLA. 6 cysteine pairs are disulfide-bonded: Cys25–Cys54, Cys28–Cys37, Cys46–Cys71, Cys77–Cys100, Cys88–Cys97, and Cys101–Cys106. The UPAR/Ly6 domain occupies 25–107; it reads CYQCEEFQLN…ISCCNTPLCN (83 aa). The N-linked (GlcNAc...) asparagine glycan is linked to Asn45. The GPI-anchor amidated glycine moiety is linked to residue Gly115. A propeptide spans 116–141 (removed in mature form); it reads SSASAIRPGLLTTLLFFHLALCLAHC.

As to quaternary structure, interacts with CHRNA4 and nAChRs containing alpha-4:beta-2 (CHRNA4:CHRNB2) and alpha-7 (CHRNA7) subunits. In terms of tissue distribution, preferentially expressed in the nervous system. Expressed in embryonic and postnatal postmitotic central and peripheral neurons including subpopulations of motor neurons, sensory neurons, interneurons and neurons of the autonomous nervous system. Expressed around the growing nerves in the limb bud. Expressed at high levels in specific brain regions such as the prefrontal cortex, amygdala, hippocampus, mediodorsal thalamus, dentate gyrus and specific brainstem nuclei (at protein level).

It is found in the cell membrane. Its function is as follows. Believed to act as a modulator of nicotinic acetylcholine receptors (nAChRs) activity. In vitro increases receptor desensitization and decreases affinity for ACh of alpha-4:beta-2-containing nAChRs. May play a role in the intracellular trafficking of alpha-4:beta-2 and alpha-7-containing nAChRs and may inhibit their expression at the cell surface. May be involved in the control of anxiety. In Mus musculus (Mouse), this protein is Ly6/PLAUR domain-containing protein 1 (Lypd1).